Reading from the N-terminus, the 162-residue chain is Heat shock protein beta-6 (162 aa).

Residues 1–72 (MEIRVPVQPS…PTAQVPTDPG (72 aa)) are involved in stabilization of the HSPB1:HSBP6 heterodimer. At S16 the chain carries Phosphoserine. Residue Q31 forms an Isoglutamyl lysine isopeptide (Gln-Lys) (interchain with K-162) linkage. The sHSP domain occupies 56-162 (RAPSVALPTA…ASLPSPPAAK (107 aa)). Residue Q66 is modified to Deamidated glutamine. S157 carries the post-translational modification Phosphoserine. An Isoglutamyl lysine isopeptide (Lys-Gln) (interchain with Q-31) cross-link involves residue K162.

The protein belongs to the small heat shock protein (HSP20) family. In terms of assembly, homodimer. Small heat shock proteins form high molecular mass oligomers containing variable number of monomers; these oligomers display a very flexible quaternary structure easily exchanging their subunits. Heterooligomer with HSPB1; formed through oligomerization of HSPB1:HSBP6 dimers; subunit exchange leads to formation of at least two different heterooligomeric complexes, differing in variable quantities of HSPB1 and HSPB6 homodimers in addition to HSPB1:HSPB6 heterodimers. Heterooligomer with CRYAB; large heterooligomers consist of CRYAB homodimers and HSPB5:HSPB6 heterodimers but lacking HSPB6 homodimers. Interacts with BAG3. Interacts (phosphorylated) with YWHAZ. Interacts with PDE4A and PDE4D; required for maintenance of the non-phosphorylated state of HSPB6 under basal conditions. Interacts with KDR. Interacts with PRKD1. The N-terminus is blocked. In terms of processing, phosphorylated at Ser-16 by PKA and probably PKD1K; required to protect cardiomyocytes from apoptosis. Widely expressed. High expression in muscle tissues.

It is found in the cytoplasm. It localises to the nucleus. The protein localises to the secreted. In terms of biological role, small heat shock protein which functions as a molecular chaperone probably maintaining denatured proteins in a folding-competent state. Seems to have versatile functions in various biological processes. Plays a role in regulating muscle function such as smooth muscle vasorelaxation and cardiac myocyte contractility. May regulate myocardial angiogenesis implicating KDR. Overexpression mediates cardioprotection and angiogenesis after induced damage. Stabilizes monomeric YWHAZ thereby supporting YWHAZ chaperone-like activity. This chain is Heat shock protein beta-6 (Hspb6), found in Rattus norvegicus (Rat).